The sequence spans 442 residues: Exodeoxyribonuclease 7 large subunit (442 aa).

This sequence belongs to the XseA family. Heterooligomer composed of large and small subunits.

It localises to the cytoplasm. The catalysed reaction is Exonucleolytic cleavage in either 5'- to 3'- or 3'- to 5'-direction to yield nucleoside 5'-phosphates.. Functionally, bidirectionally degrades single-stranded DNA into large acid-insoluble oligonucleotides, which are then degraded further into small acid-soluble oligonucleotides. The protein is Exodeoxyribonuclease 7 large subunit of Rickettsia bellii (strain OSU 85-389).